The primary structure comprises 250 residues: HTH-type transcriptional regulator SarS (250 aa).

2 consecutive DNA-binding regions (H-T-H motif) follow at residues 53-76 (FKKIVSDLCYKQSDLVQHIKVLVK) and 177-200 (LKDLIETIHHKYPQTVRALNNLKK).

This sequence belongs to the SarA family.

Its subcellular location is the cytoplasm. Its function is as follows. Transcriptional regulator that controls expression of some virulence factors in a cell density-dependent manner. The protein is HTH-type transcriptional regulator SarS (sarS) of Staphylococcus aureus (strain Mu3 / ATCC 700698).